We begin with the raw amino-acid sequence, 264 residues long: Thymidylate synthase 2 (264 aa).

Residue R21 participates in dUMP binding. H51 lines the (6R)-5,10-methylene-5,6,7,8-tetrahydrofolate pocket. A dUMP-binding site is contributed by 126 to 127; sequence RR. C146 (nucleophile) is an active-site residue. DUMP-binding positions include 166–169, N177, and 207–209; these read RSAD and HIY. Residue D169 participates in (6R)-5,10-methylene-5,6,7,8-tetrahydrofolate binding. S263 contributes to the (6R)-5,10-methylene-5,6,7,8-tetrahydrofolate binding site.

The protein belongs to the thymidylate synthase family. Bacterial-type ThyA subfamily. In terms of assembly, homodimer.

The protein localises to the cytoplasm. It carries out the reaction dUMP + (6R)-5,10-methylene-5,6,7,8-tetrahydrofolate = 7,8-dihydrofolate + dTMP. The protein operates within pyrimidine metabolism; dTTP biosynthesis. Functionally, catalyzes the reductive methylation of 2'-deoxyuridine-5'-monophosphate (dUMP) to 2'-deoxythymidine-5'-monophosphate (dTMP) while utilizing 5,10-methylenetetrahydrofolate (mTHF) as the methyl donor and reductant in the reaction, yielding dihydrofolate (DHF) as a by-product. This enzymatic reaction provides an intracellular de novo source of dTMP, an essential precursor for DNA biosynthesis. This chain is Thymidylate synthase 2, found in Bacillus spizizenii (strain ATCC 23059 / NRRL B-14472 / W23) (Bacillus subtilis subsp. spizizenii).